Consider the following 354-residue polypeptide: Probable L-ascorbate-6-phosphate lactonase UlaG (354 aa).

This sequence belongs to the UlaG family. Requires a divalent metal cation as cofactor.

It localises to the cytoplasm. The catalysed reaction is L-ascorbate 6-phosphate + H2O = 3-dehydro-L-gulonate 6-phosphate. The protein operates within cofactor degradation; L-ascorbate degradation; D-xylulose 5-phosphate from L-ascorbate: step 1/4. Probably catalyzes the hydrolysis of L-ascorbate-6-P into 3-keto-L-gulonate-6-P. Is essential for L-ascorbate utilization under anaerobic conditions. This is Probable L-ascorbate-6-phosphate lactonase UlaG from Escherichia coli O127:H6 (strain E2348/69 / EPEC).